The following is a 230-amino-acid chain: N-(5'-phosphoribosyl)anthranilate isomerase (230 aa).

Belongs to the TrpF family.

The enzyme catalyses N-(5-phospho-beta-D-ribosyl)anthranilate = 1-(2-carboxyphenylamino)-1-deoxy-D-ribulose 5-phosphate. The protein operates within amino-acid biosynthesis; L-tryptophan biosynthesis; L-tryptophan from chorismate: step 3/5. The chain is N-(5'-phosphoribosyl)anthranilate isomerase from Syntrophus aciditrophicus (strain SB).